The primary structure comprises 130 residues: Small ribosomal subunit protein uS9 (130 aa).

Belongs to the universal ribosomal protein uS9 family.

The protein is Small ribosomal subunit protein uS9 of Caldicellulosiruptor saccharolyticus (strain ATCC 43494 / DSM 8903 / Tp8T 6331).